A 946-amino-acid chain; its full sequence is Bifunctional glutamine synthetase adenylyltransferase/adenylyl-removing enzyme (946 aa).

An adenylyl removase region spans residues 1-440 (MKPLSSPLQQ…VFNELIGDDE (440 aa)). Positions 449–946 (SEQWRELWQD…ASWQKWLVEE (498 aa)) are adenylyl transferase.

This sequence belongs to the GlnE family. Requires Mg(2+) as cofactor.

The catalysed reaction is [glutamine synthetase]-O(4)-(5'-adenylyl)-L-tyrosine + phosphate = [glutamine synthetase]-L-tyrosine + ADP. It catalyses the reaction [glutamine synthetase]-L-tyrosine + ATP = [glutamine synthetase]-O(4)-(5'-adenylyl)-L-tyrosine + diphosphate. Functionally, involved in the regulation of glutamine synthetase GlnA, a key enzyme in the process to assimilate ammonia. When cellular nitrogen levels are high, the C-terminal adenylyl transferase (AT) inactivates GlnA by covalent transfer of an adenylyl group from ATP to specific tyrosine residue of GlnA, thus reducing its activity. Conversely, when nitrogen levels are low, the N-terminal adenylyl removase (AR) activates GlnA by removing the adenylyl group by phosphorolysis, increasing its activity. The regulatory region of GlnE binds the signal transduction protein PII (GlnB) which indicates the nitrogen status of the cell. The sequence is that of Bifunctional glutamine synthetase adenylyltransferase/adenylyl-removing enzyme from Escherichia coli (strain K12 / MC4100 / BW2952).